The chain runs to 443 residues: Thymidine phosphorylase (443 aa).

This sequence belongs to the thymidine/pyrimidine-nucleoside phosphorylase family. As to quaternary structure, homodimer.

The enzyme catalyses thymidine + phosphate = 2-deoxy-alpha-D-ribose 1-phosphate + thymine. Its pathway is pyrimidine metabolism; dTMP biosynthesis via salvage pathway; dTMP from thymine: step 1/2. Functionally, the enzymes which catalyze the reversible phosphorolysis of pyrimidine nucleosides are involved in the degradation of these compounds and in their utilization as carbon and energy sources, or in the rescue of pyrimidine bases for nucleotide synthesis. This Shewanella amazonensis (strain ATCC BAA-1098 / SB2B) protein is Thymidine phosphorylase.